Reading from the N-terminus, the 426-residue chain is Glutamyl-tRNA reductase (426 aa).

Substrate contacts are provided by residues threonine 49 to arginine 52, serine 107, glutamate 112 to glutamine 114, and glutamine 118. The Nucleophile role is filled by cysteine 50. NADP(+) is bound at residue glycine 187–isoleucine 192.

It belongs to the glutamyl-tRNA reductase family. As to quaternary structure, homodimer.

The catalysed reaction is (S)-4-amino-5-oxopentanoate + tRNA(Glu) + NADP(+) = L-glutamyl-tRNA(Glu) + NADPH + H(+). It functions in the pathway porphyrin-containing compound metabolism; protoporphyrin-IX biosynthesis; 5-aminolevulinate from L-glutamyl-tRNA(Glu): step 1/2. Its function is as follows. Catalyzes the NADPH-dependent reduction of glutamyl-tRNA(Glu) to glutamate 1-semialdehyde (GSA). This is Glutamyl-tRNA reductase from Ectopseudomonas mendocina (strain ymp) (Pseudomonas mendocina).